The primary structure comprises 363 residues: Protein MAK32 (363 aa).

It to S.pombe SpAC4G8.14c.

Necessary for the structural stability of L-A double-stranded RNA-containing particles. Necessary for growth at 37 degrees Celsius as well as for maintenance of the killer plasmid. The polypeptide is Protein MAK32 (MAK32) (Saccharomyces cerevisiae (strain ATCC 204508 / S288c) (Baker's yeast)).